The sequence spans 558 residues: Ribonuclease J (558 aa).

Residues His-81, His-83, Asp-85, His-86, His-148, and Asp-170 each contribute to the Zn(2+) site. Position 371 to 375 (371 to 375 (HVSGH)) interacts with substrate. His-397 contributes to the Zn(2+) binding site.

It belongs to the metallo-beta-lactamase superfamily. RNA-metabolizing metallo-beta-lactamase-like family. Bacterial RNase J subfamily. As to quaternary structure, homodimer. Requires Zn(2+) as cofactor.

It is found in the cytoplasm. In terms of biological role, an RNase that has endonuclease and 5'-3' exonuclease activity. The 5'-exonuclease activity acts on 5'-monophosphate but not 5'-triphosphate ends. Endonuclease activity can cleave within 4 nucleotides of the 5'-end of a triphosphorylated RNA. Plays the major role in pre-23S rRNA maturation, and a minor role in processing of pre-5S and pre-16S rRNA. In Mycolicibacterium smegmatis (strain ATCC 700084 / mc(2)155) (Mycobacterium smegmatis), this protein is Ribonuclease J.